The chain runs to 209 residues: Large ribosomal subunit protein uL3 (209 aa).

N5-methylglutamine is present on Gln-150.

Belongs to the universal ribosomal protein uL3 family. In terms of assembly, part of the 50S ribosomal subunit. Forms a cluster with proteins L14 and L19. In terms of processing, methylated by PrmB.

In terms of biological role, one of the primary rRNA binding proteins, it binds directly near the 3'-end of the 23S rRNA, where it nucleates assembly of the 50S subunit. The sequence is that of Large ribosomal subunit protein uL3 from Photobacterium profundum (strain SS9).